Here is a 327-residue protein sequence, read N- to C-terminus: 2-keto-3-deoxygluconate permease (327 aa).

Helical transmembrane passes span 10-30 (IPGG…TFSP), 42-62 (GMIT…GASI), 73-93 (KSGT…AIAS), 95-115 (IIPE…LALV), 139-159 (AGAF…IILG), 163-183 (IASF…VGFA), 199-219 (VQTL…LTVI), 224-244 (LLGI…LIIA), 254-274 (TAGI…VLIA), and 289-309 (SLVA…TSIW).

The protein belongs to the KdgT transporter family.

The protein resides in the cell inner membrane. The catalysed reaction is 2-dehydro-3-deoxy-D-gluconate(in) + H(+)(in) = 2-dehydro-3-deoxy-D-gluconate(out) + H(+)(out). Functionally, catalyzes the proton-dependent uptake of 2-keto-3-deoxygluconate (KDG) into the cell. This is 2-keto-3-deoxygluconate permease from Escherichia coli O157:H7.